We begin with the raw amino-acid sequence, 485 residues long: Threonine synthase-like 2 (485 aa).

The residue at position 113 (Lys-113) is an N6-(pyridoxal phosphate)lysine.

The protein belongs to the threonine synthase family. The cofactor is pyridoxal 5'-phosphate.

In terms of biological role, acts as a catabolic phospho-lyase on both gamma- and beta-phosphorylated substrates. Degrades O-phospho-threonine (PThr) to alpha-ketobutyrate, ammonia and phosphate. The polypeptide is Threonine synthase-like 2 (Thnsl2) (Rattus norvegicus (Rat)).